Here is an 858-residue protein sequence, read N- to C-terminus: Polyhomeotic-like protein 2 (858 aa).

Disordered regions lie at residues 1-76, 230-307, 337-388, 407-444, 473-493, and 529-561; these read MENE…QYLQ, QQTP…MEGR, PQPS…VALQ, LQCPTANLHKPGGSQQCHPPTPDTGPQNGHPEGVPHTP, KEVAPGEKSVPETRSGPSPHQ, and TDLSSPGMTSGNGNSASSIAGTAPQNGENKPPQ. Low complexity-rich tracts occupy residues 10-34 and 230-241; these read TSSSACATSSTSGASSSSGCNNSSS and QQTPAAAASGPT. Residues 33–53 form an interaction with BMI1 region; it reads SSGGSGRPTGPQISVYSGIPD. Over residues 265 to 274 the composition is skewed to polar residues; it reads PAQSRNTAQA. Residues 337-358 show a composition bias toward low complexity; that stretch reads PQPSSKHLQPQFVIQQQPQPQQ. The segment covering 379–388 has biased composition (polar residues); it reads ASVSPSVALQ. The segment covering 473–483 has biased composition (basic and acidic residues); sequence KEVAPGEKSVP. Over residues 537-551 the composition is skewed to low complexity; sequence TSGNGNSASSIAGTA. Positions 558–587 match the HD1 motif; the sequence is KPPQAIVKPQILTHVIEGFVIQEGAEPFPV. Residues K598 and K600 each participate in a glycyl lysine isopeptide (Lys-Gly) (interchain with G-Cter in SUMO2) cross-link. T619 bears the Phosphothreonine mark. S621 is modified (phosphoserine). A Glycyl lysine isopeptide (Lys-Gly) (interchain with G-Cter in SUMO2) cross-link involves residue K632. The FCS-type zinc-finger motif lies at 633-667; the sequence is EEGAPLKLKCELCGRVDFAYKFKRSKRFCSMACAK. Zn(2+)-binding residues include C642, C645, C661, and C665. 2 disordered regions span residues 688-720 and 732-768; these read QKAGAATHNRRRASKASLPPLTKDTKKQPTGTV and HSQEDSSRCSDNSSYEEPLSPISASSSTSRRRQGQRD. K702 is covalently cross-linked (Glycyl lysine isopeptide (Lys-Gly) (interchain with G-Cter in SUMO2)). S751 bears the Phosphoserine mark. The 65-residue stretch at 794-858 folds into the SAM domain; it reads WNVEDVYEFI…YARISMLKDS (65 aa). Residue K847 forms a Glycyl lysine isopeptide (Lys-Gly) (interchain with G-Cter in SUMO2) linkage.

As to quaternary structure, component of a PRC1-like complex. Interacts with CBX4. Interacts with BMI1, PCGF2, PHC1 and RNF2. Interacts with CHTOP. Interacts with the N-terminal region of the SP1 transcription factor and with MAPKAPK2. Interacts with SAMD7 and SAMD11.

It localises to the nucleus. In terms of biological role, component of a Polycomb group (PcG) multiprotein PRC1-like complex, a complex class required to maintain the transcriptionally repressive state of many genes, including Hox genes, throughout development. PcG PRC1 complex acts via chromatin remodeling and modification of histones; it mediates monoubiquitination of histone H2A 'Lys-119', rendering chromatin heritably changed in its expressibility. This Homo sapiens (Human) protein is Polyhomeotic-like protein 2 (PHC2).